Reading from the N-terminus, the 233-residue chain is UPF0502 protein YPTS_2082 (233 aa).

This sequence belongs to the UPF0502 family.

The protein is UPF0502 protein YPTS_2082 of Yersinia pseudotuberculosis serotype IB (strain PB1/+).